The following is a 515-amino-acid chain: Bifunctional purine biosynthesis protein PurH (515 aa).

The region spanning 1–145 (MTKRALISVS…KNHASVTVVV (145 aa)) is the MGS-like domain.

The protein belongs to the PurH family.

It catalyses the reaction (6R)-10-formyltetrahydrofolate + 5-amino-1-(5-phospho-beta-D-ribosyl)imidazole-4-carboxamide = 5-formamido-1-(5-phospho-D-ribosyl)imidazole-4-carboxamide + (6S)-5,6,7,8-tetrahydrofolate. The enzyme catalyses IMP + H2O = 5-formamido-1-(5-phospho-D-ribosyl)imidazole-4-carboxamide. It participates in purine metabolism; IMP biosynthesis via de novo pathway; 5-formamido-1-(5-phospho-D-ribosyl)imidazole-4-carboxamide from 5-amino-1-(5-phospho-D-ribosyl)imidazole-4-carboxamide (10-formyl THF route): step 1/1. The protein operates within purine metabolism; IMP biosynthesis via de novo pathway; IMP from 5-formamido-1-(5-phospho-D-ribosyl)imidazole-4-carboxamide: step 1/1. The chain is Bifunctional purine biosynthesis protein PurH from Streptococcus mutans serotype c (strain ATCC 700610 / UA159).